A 329-amino-acid chain; its full sequence is Fructose-1,6-bisphosphatase class 1 (329 aa).

4 residues coordinate Mg(2+): Glu-84, Asp-103, Leu-105, and Asp-106. Residues 106-109, Asn-196, and Lys-262 contribute to the substrate site; that span reads DGSS. Glu-268 lines the Mg(2+) pocket.

It belongs to the FBPase class 1 family. In terms of assembly, homotetramer. Mg(2+) is required as a cofactor.

The protein localises to the cytoplasm. The enzyme catalyses beta-D-fructose 1,6-bisphosphate + H2O = beta-D-fructose 6-phosphate + phosphate. Its pathway is carbohydrate biosynthesis; gluconeogenesis. The polypeptide is Fructose-1,6-bisphosphatase class 1 (Shewanella pealeana (strain ATCC 700345 / ANG-SQ1)).